The following is a 528-amino-acid chain: Phosphoenolpyruvate carboxykinase (ATP) (528 aa).

3 residues coordinate substrate: Arg56, Tyr192, and Lys198. Residues Lys198, His217, and 233 to 241 (GLSGTGKTT) each bind ATP. Mn(2+) is bound by residues Lys198 and His217. Asp254 contributes to the Mn(2+) binding site. ATP is bound by residues Glu282, Arg319, and Thr444. Arg319 is a substrate binding site.

It belongs to the phosphoenolpyruvate carboxykinase (ATP) family. Requires Mn(2+) as cofactor.

The protein resides in the cytoplasm. The catalysed reaction is oxaloacetate + ATP = phosphoenolpyruvate + ADP + CO2. It functions in the pathway carbohydrate biosynthesis; gluconeogenesis. Involved in the gluconeogenesis. Catalyzes the conversion of oxaloacetate (OAA) to phosphoenolpyruvate (PEP) through direct phosphoryl transfer between the nucleoside triphosphate and OAA. This Bacillus mycoides (strain KBAB4) (Bacillus weihenstephanensis) protein is Phosphoenolpyruvate carboxykinase (ATP).